The sequence spans 459 residues: Glutamate--tRNA ligase 1 (459 aa).

A 'HIGH' region motif is present at residues 8–18 (PSPTGYIHIGN). The short motif at 249–253 (GLSKR) is the 'KMSKS' region element. Lys-252 serves as a coordination point for ATP.

It belongs to the class-I aminoacyl-tRNA synthetase family. Glutamate--tRNA ligase type 1 subfamily. In terms of assembly, monomer.

The protein resides in the cytoplasm. It catalyses the reaction tRNA(Glu) + L-glutamate + ATP = L-glutamyl-tRNA(Glu) + AMP + diphosphate. In terms of biological role, catalyzes the attachment of glutamate to tRNA(Glu) in a two-step reaction: glutamate is first activated by ATP to form Glu-AMP and then transferred to the acceptor end of tRNA(Glu). In Bartonella quintana (strain Toulouse) (Rochalimaea quintana), this protein is Glutamate--tRNA ligase 1.